The primary structure comprises 1179 residues: MDSFDPQQLGLSPARFAGTFGSGAASVSCSRLRQVQSVLTQSSKSQPDGILCILGIDSRYNEGCRELANYLLFGLYSQNATDFEKTGFSEEILDDVILLIKSDSVHLYCNPVNYRYLLPYVAHWRNLHFHCMTENEYEDEEAAEEFKISSFVDMVRDCSRIGIPYSSQGHLQIFDMFVVEKWPIVQAFALEGIGGDGFFTMKYELQDVSLSLWNVYSRMDPASLENMLSEDLAVFEHQWTSFFANFDTEIPFLLELSESQAGEPFRSYFGHGMLSSHITENSPHRQPFVLFGNHSTRDNLSAGSFNFPSEGHLVRNTGPAGSFAKHMVAQCVSPKGPLACSRTYFFGATHVPYLGDNEKLPRTTEQIRLLSQIYAAVIEAVLAGIACYAKTCSLAKAKEVAEHTLESGLVFTELVPFKADLRSKVTFHIHAVNNQGRIVPLNNEDSLSFVKTARMTVYDIPDLLGGGGGGCLGSVVFSESFLTSRILVKEKDGTITPETSYIILTAAIPRFCSWLVEDSEIKLSEKTLQATKGDDCCLGTLLTGGKGAYLYSNSPQSGPEEGSAYFFSGGLLFSHRHHGSIVIAKEHVDAFSFYDGDSTSVVAALLIHFRSSILPHLPVHFHGSSNFLMLALFPKSKIYQAFYSEVFSPWQQQDNSGLSLKVIQEDGLSAEQKRLHSNAQKLFSALSPPAQDWSSPKLLSGKLPELDRFLQHFAIGSIGQEPVMRAHLVGLLQQPEMSPAHEVESDKVVISIVTGLPGCHASKLCAFLITLHKEYGRWMVYRQIMDSSECFHAAHFQKYLSSALEAQQNRSARQSAYIRKKTRLLVVLQGYTDVIDVVQALQTHPDPNVRSYFTIGAVTVCVEPLSCYMEHRFLFPKCLDQCSQGVVSNVVFTSHTAEQKHPLLVQLQTLIRASNPTAAFILAENGIVTRNEDIELILSENSFSSPQMLRSRYLLFPGWYEGKFDAGSVFPLMVQICVWFDCPLEKTRFVSRCRAIQSSIKPSPFSGNIYHILGKVKFSDSEKTMEVCHNTLTNSLTIVPVLEGPTPPPNSRSSPQDNGQPECYLVFIGCSLKEDSLKDWLRQSAKQRPQRKALKTRGMLTQQEIKNIHVKRHLDPLPAGYFYNGTQFVNFFGDKTDFHPLMDQFMNDYVEEANREIERYNRELEQQEYRDLFEQKPKP.

As to quaternary structure, interacts with ARL3.

Its function is as follows. May act as an effector for ARL3. The polypeptide is Dynein axonemal assembly factor 9 (Mus musculus (Mouse)).